Consider the following 180-residue polypeptide: Der GTPase-activating protein YihI (180 aa).

Disordered regions lie at residues 1–90 (MSRK…QERR) and 145–180 (EPEEDEDFTAPAVKGSRNDDDLLADFDDINFDDYKG). Over residues 23-32 (NRTESDVEGR) the composition is skewed to basic and acidic residues. The span at 33 to 43 (LRKRAKKRKGL) shows a compositional bias: basic residues. Composition is skewed to basic and acidic residues over residues 50 to 68 (SDAEEQKRQAAAQKRDPRL) and 80 to 90 (PVKKQTKQERR). The segment covering 165–180 (DLLADFDDINFDDYKG) has biased composition (acidic residues).

Belongs to the YihI family. In terms of assembly, interacts with Der.

Functionally, a GTPase-activating protein (GAP) that modifies Der/EngA GTPase function. May play a role in ribosome biogenesis. In Vibrio campbellii (strain ATCC BAA-1116), this protein is Der GTPase-activating protein YihI.